A 163-amino-acid polypeptide reads, in one-letter code: Endoribonuclease YbeY (163 aa).

Positions 119, 123, and 129 each coordinate Zn(2+).

This sequence belongs to the endoribonuclease YbeY family. It depends on Zn(2+) as a cofactor.

It is found in the cytoplasm. Single strand-specific metallo-endoribonuclease involved in late-stage 70S ribosome quality control and in maturation of the 3' terminus of the 16S rRNA. The sequence is that of Endoribonuclease YbeY from Actinobacillus pleuropneumoniae serotype 5b (strain L20).